Consider the following 433-residue polypeptide: Pectinesterase B (433 aa).

An N-terminal signal peptide occupies residues 1–21 (MSLTHYSGLAAAVSMSLILTA). Residue C22 is the site of N-palmitoyl cysteine attachment. A lipid anchor (S-diacylglycerol cysteine) is attached at C22. The Periplasmic portion of the chain corresponds to 22-433 (CGGQTPNSAR…EYNTQVLLHE (412 aa)). The substrate site is built by T202 and Q236. D259 serves as the catalytic Proton donor. D292 acts as the Nucleophile in catalysis. The substrate site is built by R356 and W358.

This sequence belongs to the pectinesterase family.

Its subcellular location is the cell outer membrane. The catalysed reaction is [(1-&gt;4)-alpha-D-galacturonosyl methyl ester](n) + n H2O = [(1-&gt;4)-alpha-D-galacturonosyl](n) + n methanol + n H(+). The protein operates within glycan metabolism; pectin degradation; 2-dehydro-3-deoxy-D-gluconate from pectin: step 1/5. Probably involved in the degradation of methylated oligogalacturonides present in the periplasm. More active on methylated oligogalacturides than on pectin. This is Pectinesterase B from Dickeya dadantii (strain 3937) (Erwinia chrysanthemi (strain 3937)).